Consider the following 243-residue polypeptide: UPF0758 protein Tery_2667 (243 aa).

The 123-residue stretch at 113-235 (VVESPQAAAD…HSSLRQITNL (123 aa)) folds into the MPN domain. Residues H184, H186, and D197 each contribute to the Zn(2+) site. A JAMM motif motif is present at residues 184-197 (HNHPSGNVEPSPED).

This sequence belongs to the UPF0758 family.

This is UPF0758 protein Tery_2667 from Trichodesmium erythraeum (strain IMS101).